The primary structure comprises 56 residues: Large ribosomal subunit protein bL33 (56 aa).

This sequence belongs to the bacterial ribosomal protein bL33 family.

The protein is Large ribosomal subunit protein bL33 (rpmG) of Treponema pallidum (strain Nichols).